The chain runs to 1013 residues: Nucleotide-binding oligomerization domain-containing protein 2 (1013 aa).

CARD domains are found at residues 1 to 82 (MCSQ…AVQE) and 107 to 178 (LQSH…HVQK). An ATG16L1-binding motif motif is present at residues 36–50 (WEVLSWEDYEGLRLV). Residues T212, Y225, T226, G275, S276, G277, K278, S279, and T280 each contribute to the ADP site. The tract at residues 214–247 (DGAENLCLEDIYTENTLEVRTEVGMAGPLHKSPA) is required for CARD9 binding. An NACHT domain is found at 266–402 (DTVLVVGEAG…RKVLTSRPDA (137 aa)). 272-279 (GEAGSGKS) is an ATP binding site. C368 carries S-palmitoyl cysteine lipidation. H576 is an ADP binding site. 9 LRR repeats span residues 764-785 (RPVA…QLLP), 789-812 (ACKA…IEHA), 817-838 (QLQK…SVAQ), 845-857 (NFLA…NHIT), 873-893 (SLQF…QALA), 901-922 (SLKW…ALAS), 929-949 (ALEE…CSLA), 957-978 (SLKV…ALLQ), and 985-1005 (TILE…EALS).

It belongs to the NOD1-NOD2 family. Homooligomer: homooligomerizes following muramyl dipeptide (MDP)-binding, promoting RIPK2 recruitment. Interacts (via CARD domain) with RIPK2 (via CARD domain). Following RIPK2 recruitment, RIPK2 homooligomerizes via its CARD domain and forms long filaments named RIPosomes. Interacts (via CARD domain) with ubiquitin; inhibiting interaction with RIPK2. Component of a signaling complex consisting of ARHGEF2, NOD2 and RIPK2. Interacts with ANKRD17 (via N-terminus). Interacts with HSPA1A; the interaction enhances NOD2 stability. Interacts (via both CARD domains) with HSP90; the interaction enhances NOD2 stability. Interacts (via CARD domain) with SOCS3; the interaction promotes NOD2 degradation. Interacts (via CARD domain) with ERBIN; the interaction inhibits activation of NOD2. Interacts with MAPKBP1; the interaction is enhanced in the presence of muramyl dipeptide (MDP) and inhibits NOD2 homooligomerization and activation. Interacts with INAVA; the interaction takes place upon Pattern recognition receptor (PRR) stimulation. Interacts (via NACHT domain) with CARD9. Interacts (via CARD domain) with CASP1; this interaction leads to IL1B processing. Also interacts with CASP4. Interacts with NLRP1; this interaction is enhanced in the presence of muramyl dipeptide (MDP) and leads to increased IL1B release. Interacts with NLRP12; this interaction promotes degradation of NOD2 through the ubiquitin-proteasome pathway. Interacts with ANKHD1, C10orf67, CHMP5, DOCK7, ENTR1, KRT15, LDOC1, PPP1R12C, PPP2R3B, TRIM41 and VIM. Interacts with MAVS; interaction takes place following single-stranded RNA (ssRNA)-binding. Interacts with ATG16L1. Interacts with IRGM; promoting IRGM 'Lys-63'-linked polyubiquitination, which is required for interactions with the core autophagy factors. In terms of processing, palmitoylated by ZDHHC5; palmitoylation is required for proper recruitment to the bacterial entry site and hence for proper signaling upon cognate peptidoglycan detection. Palmitoylation promotes localization to the cell membrane. Palmitoylation protects from SQSTM1/p62-dependent autophagic degradation. Polyubiquitinated by TRIM27, leading to proteasome-mediated degradation. Polyubiquitinated and degraded following muramyl dipeptide (MDP) stimulation, conferring MDP tolerance and preventing septic shock. Post-translationally, degraded via selective autophagy following interaction with IRGM. IRGM promotes NOD2-RIPK2 RIPosome recruitment to autophagosome membranes, promoting their SQSTM1/p62-dependent autophagic degradation. In terms of processing, O-glycosylated by OGT, O-GlcNAcylation increases protein stability.

It is found in the cell membrane. Its subcellular location is the basolateral cell membrane. It localises to the cytoplasm. The protein localises to the mitochondrion. With respect to regulation, ADP-binding promotes an inactive closed conformation. Functionally, pattern recognition receptor (PRR) that detects bacterial peptidoglycan fragments and other danger signals and plays an important role in gastrointestinal immunity. Specifically activated by muramyl dipeptide (MDP), a fragment of bacterial peptidoglycan found in every bacterial peptidoglycan type. NOD2 specifically recognizes and binds 6-O-phospho-MDP, the phosphorylated form of MDP, which is generated by NAGK. 6-O-phospho-MDP-binding triggers oligomerization that facilitates the binding and subsequent activation of the proximal adapter receptor-interacting RIPK2. Following recruitment, RIPK2 undergoes 'Met-1'- (linear) and 'Lys-63'-linked polyubiquitination by E3 ubiquitin-protein ligases XIAP, BIRC2, BIRC3 and the LUBAC complex, becoming a scaffolding protein for downstream effectors, triggering activation of the NF-kappa-B and MAP kinases signaling. This in turn leads to the transcriptional activation of hundreds of genes involved in immune response. Its ability to detect bacterial MDP plays a central role in maintaining the equilibrium between intestinal microbiota and host immune responses to control inflammation. An imbalance in this relationship results in dysbiosis, whereby pathogenic bacteria prevail on commensals, causing damage in the intestinal epithelial barrier as well as allowing bacterial invasion and inflammation. Acts as a regulator of appetite by sensing MDP in a subset of brain neurons: microbiota-derived MDP reach the brain, where they bind and activate NOD2 in inhibitory hypothalamic neurons, decreasing neuronal activity, thereby regulating satiety and body temperature. NOD2-dependent MDP-sensing of bacterial cell walls in the intestinal epithelial compartment contributes to sustained postnatal growth upon undernutrition. Also plays a role in antiviral response by acting as a sensor of single-stranded RNA (ssRNA) from viruses: upon ssRNA-binding, interacts with MAVS, leading to activation of interferon regulatory factor-3/IRF3 and expression of type I interferon. Also acts as a regulator of autophagy in dendritic cells via its interaction with ATG16L1, possibly by recruiting ATG16L1 at the site of bacterial entry. NOD2 activation in the small intestine crypt also contributes to intestinal stem cells survival and function: acts by promoting mitophagy via its association with ATG16L1. In addition to its main role in innate immunity, also regulates the adaptive immune system by acting as regulator of helper T-cell and regulatory T-cells (Tregs). Besides recognizing pathogens, also involved in the endoplasmic reticulum stress response: acts by sensing and binding to the cytosolic metabolite sphingosine-1-phosphate generated in response to endoplasmic reticulum stress, initiating an inflammation process that leads to activation of the NF-kappa-B and MAP kinases signaling. May also be involved in NLRP1 activation following activation by MDP, leading to CASP1 activation and IL1B release in macrophages. The chain is Nucleotide-binding oligomerization domain-containing protein 2 from Oryctolagus cuniculus (Rabbit).